The following is a 342-amino-acid chain: Ribosomal RNA small subunit methyltransferase C (342 aa).

The protein belongs to the methyltransferase superfamily. RsmC family. As to quaternary structure, monomer.

The protein localises to the cytoplasm. The catalysed reaction is guanosine(1207) in 16S rRNA + S-adenosyl-L-methionine = N(2)-methylguanosine(1207) in 16S rRNA + S-adenosyl-L-homocysteine + H(+). In terms of biological role, specifically methylates the guanine in position 1207 of 16S rRNA in the 30S particle. The chain is Ribosomal RNA small subunit methyltransferase C from Shewanella loihica (strain ATCC BAA-1088 / PV-4).